Consider the following 330-residue polypeptide: MNTEATQDHQEANTTGARLRHAREQLGLSQQAVAERLCLKVSTVRDIEDDKAPADLASTFLRGYIRSYARLVHIPEEELLPMMAKQAPIRAAKVAPMQSFSLGKRRKKRDGWLMSFTWLVLFVVIGLSGAWWWQDHKAQQEEISTMADQSSAELNGGDANSQNVPLDTSAPVDSGTDSAANSAPTDTASTPTTSAPAQTPADNNAVVAPSQANVDTAGTAPTTPATPASPLPTDQANVTTPAASAQDLVMNFSADCWLEVSDATGKKLFSGLQRKGGNLNLSGQAPYKLKIGAPAAVQIQFLGKPVDLSRFIRTNQVARLTLNAEQSPAQ.

The Cytoplasmic segment spans residues 1–111 (MNTEATQDHQ…LGKRRKKRDG (111 aa)). Positions 19 to 71 (LRHAREQLGLSQQAVAERLCLKVSTVRDIEDDKAPADLASTFLRGYIRSYARL) constitute an HTH cro/C1-type domain. The H-T-H motif DNA-binding region spans 30–49 (QQAVAERLCLKVSTVRDIED). The helical; Signal-anchor for type II membrane protein transmembrane segment at 112–132 (WLMSFTWLVLFVVIGLSGAWW) threads the bilayer. Residues 133 to 330 (WQDHKAQQEE…TLNAEQSPAQ (198 aa)) lie on the Periplasmic side of the membrane. Positions 146-166 (MADQSSAELNGGDANSQNVPL) are enriched in polar residues. Residues 146–237 (MADQSSAELN…ASPLPTDQAN (92 aa)) are disordered. Low complexity-rich tracts occupy residues 176–202 (TDSAANSAPTDTASTPTTSAPAQTPAD) and 216–233 (TAGTAPTTPATPASPLPT).

Belongs to the RodZ family.

It is found in the cell inner membrane. Its function is as follows. Cytoskeletal protein that is involved in cell-shape control through regulation of the length of the long axis. The chain is Cytoskeleton protein RodZ from Klebsiella pneumoniae (strain 342).